Reading from the N-terminus, the 935-residue chain is Progesterone receptor (935 aa).

Residues 1–49 (MTELKAKGXRAPHVAGSPSSPKVXSPLPCRQAAXPFPGSQTSDTLPEVS) are disordered. Residues 1–164 (MTELKAKGXR…SATQRVLSRL (164 aa)) are AF3; mediates transcriptional activation. Positions 1-568 (MTELKAKGXR…YSFESLPQKI (568 aa)) are modulating, Pro-Rich. Residues 17–28 (SPSSPKVXSPLP) show a composition bias toward low complexity. Ser20 bears the Phosphoserine mark. Residues 55–59 (LDGLL) carry the LXXL motif 1 motif. The segment at 61–255 (PRICQGQDPP…GAAAGGGAAA (195 aa)) is disordered. A Phosphoserine modification is found at Ser81. The LXXL motif 2 signature appears at 115–119 (LDTLW). Phosphoserine is present on residues Ser130 and Ser162. A mediates transcriptional transrepression region spans residues 165 to 305 (MSRSGGKAGD…LATTVTDFIH (141 aa)). The Nuclear localization signal motif lies at 183-187 (KVLPR). Ser190 bears the Phosphoserine mark. Polar residues predominate over residues 191–203 (PSRQLLLPTTGSP). Phosphoserine is present on Ser213. A compositionally biased stretch (acidic residues) spans 220 to 231 (EVEEEDGSESED). The span at 232-246 (SAGPLLKGKPRALGG) shows a compositional bias: low complexity. A Phosphoserine; by MAPK1 modification is found at Ser294. The segment at 331–365 (GGAGAASAFAPPRSSPSASSTPVPGGDFPDCAYAP) is disordered. The segment covering 335-356 (AASAFAPPRSSPSASSTPVPGG) has biased composition (low complexity). Ser345 carries the post-translational modification Phosphoserine; by MAPK. Lys388 participates in a covalent cross-link: Glycyl lysine isopeptide (Lys-Gly) (interchain with G-Cter in SUMO); alternate. Lys388 is covalently cross-linked (Glycyl lysine isopeptide (Lys-Gly) (interchain with G-Cter in ubiquitin); alternate). Ser400 is subject to Phosphoserine; by CDK2. Positions 415 to 452 (PDFPLGPPPPLPPRAPPSRPGEAAVTAAPASASVSSAS) are disordered. A compositionally biased stretch (pro residues) spans 418-433 (PLGPPPPLPPRAPPSR). Low complexity predominate over residues 434–452 (PGEAAVTAAPASASVSSAS). Residues 456–548 (STLECILYKA…VYPPYLNYLR (93 aa)) form an AF1; mediates transcriptional activation region. Residue Lys533 forms a Glycyl lysine isopeptide (Lys-Gly) (interchain with G-Cter in SUMO) linkage. 2 NR C4-type zinc fingers span residues 569-589 (CLICGDEASGCHYGVLTCGSC) and 605-629 (CAGRNDCIVDKIRRKNCPACRLRKC). Residues 569-641 (CLICGDEASG…AGMVLGGRKF (73 aa)) constitute a DNA-binding region (nuclear receptor). A Phosphoserine modification is found at Ser678. An NR LBD domain is found at 681–915 (QDIQLIPPLI…EFPEMMSEVI (235 aa)). Residues 689 to 935 (LINLLLSIEP…MVKPLLFHKK (247 aa)) are AF2; mediates transcriptional activation.

This sequence belongs to the nuclear hormone receptor family. Interacts with SMARD1 and UNC45A. Interacts with CUEDC2; the interaction promotes ubiquitination, decreases sumoylation, and represses transcriptional activity. Interacts with PIAS3; the interaction promotes sumoylation of PR in a hormone-dependent manner, inhibits DNA-binding, and alters nuclear export. Interacts with SP1; the interaction requires ligand-induced phosphorylation on Ser-345 by ERK1/2-MAPK. Interacts with PRMT2. Interacts with NCOA2 and NCOA1. Interacts with KLF9. Interacts with GTF2B. In terms of processing, phosphorylated on multiple serine sites. Several of these sites are hormone-dependent. Phosphorylation on Ser-294 is highly hormone-dependent and modulates ubiquitination and sumoylation on Lys-388. Phosphorylation on Ser-345 also requires induction by hormone. Basal phosphorylation on Ser-81, Ser-162, Ser-190 and Ser-400 is increased in response to progesterone and can be phosphorylated in vitro by the CDK2-A1 complex. Increased levels of phosphorylation on Ser-400 also in the presence of EGF, heregulin, IGF, PMA and FBS. Phosphorylation at this site by CDK2 is ligand-independent, and increases nuclear translocation and transcriptional activity. Phosphorylation at Ser-162 and Ser-294, but not at Ser-190, is impaired during the G(2)/M phase of the cell cycle. Phosphorylation on Ser-345 by ERK1/2 MAPK is required for interaction with SP1. Sumoylation is hormone-dependent and represses transcriptional activity. Sumoylation on all three sites is enhanced by PIAS3. Desumoylated by SENP1. Sumoylation on Lys-388, the main site of sumoylation, is repressed by ubiquitination on the same site, and modulated by phosphorylation at Ser-294. Post-translationally, ubiquitination is hormone-dependent and represses sumoylation on the same site. Promoted by MAPK-mediated phosphorylation on Ser-294. In terms of processing, palmitoylated by ZDHHC7 and ZDHHC21. Palmitoylation is required for plasma membrane targeting and for rapid intracellular signaling via ERK and AKT kinases and cAMP generation.

The protein localises to the nucleus. The protein resides in the cytoplasm. In terms of biological role, the steroid hormones and their receptors are involved in the regulation of eukaryotic gene expression and affect cellular proliferation and differentiation in target tissues. Transcriptional activator of several progesteron-dependent promoters in a variety of cell types. Involved in activation of SRC-dependent MAPK signaling on hormone stimulation. This Ateles paniscus (Black spider monkey) protein is Progesterone receptor (PGR).